The following is a 365-amino-acid chain: MISYPFFSLSPPGLVPPPMAVPPVEMYSGSFWNRMRKPLPLRTQVIRFTVVFVIVSFILAVALQITHERMPDPKVTKPLPDLGFELLTKVPGMYVLADCCIGFLNILSVFTAFKLYLLHRHCVGSGEPELPCNIPGVSRFFLSVWLCKENCRIELRNVHTIAWIRFITSYALLLLFRSVVIVMTSLPAPDDLCQDPPKIENPVKNVILTVLTAGGGSIHCGDLMYSGHTVILTLHLMFHWIYGAMVHWSFRPVVTVVAIFGYYCIVASRFHYTDDVLVAIYLTIATFIAVGHNADGAPWQLQLFIRWLPCCGANSREMTEDSQPVMVAFKSEELDEMNGVLEGRQKKHGGVGDGEALMFKCGAYV.

The Cytoplasmic segment spans residues 1–44 (MISYPFFSLSPPGLVPPPMAVPPVEMYSGSFWNRMRKPLPLRTQ). Residues 45–65 (VIRFTVVFVIVSFILAVALQI) traverse the membrane as a helical segment. The Lumenal segment spans residues 66–92 (THERMPDPKVTKPLPDLGFELLTKVPG). Residues 93 to 113 (MYVLADCCIGFLNILSVFTAF) traverse the membrane as a helical segment. Residues 114–165 (KLYLLHRHCVGSGEPELPCNIPGVSRFFLSVWLCKENCRIELRNVHTIAWIR) lie on the Cytoplasmic side of the membrane. A helical transmembrane segment spans residues 166 to 186 (FITSYALLLLFRSVVIVMTSL). Residues 187–229 (PAPDDLCQDPPKIENPVKNVILTVLTAGGGSIHCGDLMYSGHT) lie on the Lumenal side of the membrane. His228 is an active-site residue. The chain crosses the membrane as a helical span at residues 230-250 (VILTLHLMFHWIYGAMVHWSF). Position 251 (Arg251) is a topological domain, cytoplasmic. Residues 252 to 272 (PVVTVVAIFGYYCIVASRFHY) traverse the membrane as a helical segment. Active-site residues include His271 and Asp275. Residues 273-275 (TDD) are Lumenal-facing. A helical transmembrane segment spans residues 276-296 (VLVAIYLTIATFIAVGHNADG). Over 297 to 365 (APWQLQLFIR…ALMFKCGAYV (69 aa)) the chain is Cytoplasmic.

It belongs to the sphingomyelin synthase family.

It localises to the golgi apparatus membrane. The enzyme catalyses an N-acylsphing-4-enine + a 1,2-diacyl-sn-glycero-3-phosphocholine = a sphingomyelin + a 1,2-diacyl-sn-glycerol. Bidirectional lipid cholinephosphotransferase capable of converting phosphatidylcholine (PC) and ceramide to sphingomyelin (SM) and diacylglycerol (DAG) and vice versa. Direction is dependent on the relative concentrations of DAG and ceramide as phosphocholine acceptors. Directly and specifically recognizes the choline head group on the substrate. Also requires two fatty chains on the choline-P donor molecule in order to be recognized efficiently as a substrate. Does not function strictly as a SM synthase. Essential for viability of the pathogenic bloodstream stage of this human protozoan parasite and, consequently, can be considered as potential drug target. This is Phosphatidylcholine:ceramide cholinephosphotransferase 4 from Trypanosoma brucei brucei (strain 927/4 GUTat10.1).